Reading from the N-terminus, the 41-residue chain is MKVRNSLRSLKSRHRDCRVVRRKGRVYVINKTQRKFKARQG.

This sequence belongs to the bacterial ribosomal protein bL36 family.

This Ruegeria pomeroyi (strain ATCC 700808 / DSM 15171 / DSS-3) (Silicibacter pomeroyi) protein is Large ribosomal subunit protein bL36.